The sequence spans 476 residues: Rab-3A-interacting protein (476 aa).

Ser-163 and Ser-165 each carry phosphoserine; by PKB/AKT1. Positions 165–260 form a coiled coil; that stretch reads SVLEVREKGY…EVAALKTLVL (96 aa). The segment at 262–297 is disordered; that stretch reads SSPTSPTQEPLPGGKTPFKKGHTRNKSTSSAMSGSH. Phosphoserine occurs at positions 263, 266, 288, and 296. The span at 287 to 297 shows a compositional bias: polar residues; it reads KSTSSAMSGSH. The interval 435–444 is important for RAB11A binding; it reads TYIRYIQQGL.

It belongs to the SEC2 family. Homodimer. Interacts with the N-terminal region of SSX2. Interacts with the GDP-bound forms of RAB8A and RAB8B. The interaction with RAB8A is prevented by phosphorylation of RAB8A at 'Thr-72'. Interacts with the GDP-bound forms of RAB3A and RAB3D. Interacts with DCDC1. Interacts (via the N-terminal region) with TRAPPC14; this interaction mediates RAB3IP association with the TRAPP II complex. Forms a heterotetramer with RAB11A where RAB3IP homodimer binds two RAB11A subunits. Forms a complex with RAB11A and RAB11FIP3, probably a heterohexamer with two of each protein subunit, where Rabin8/RAB3IP and RAB11FIP3 simultaneously bind to RAB11A; the complex promotes preciliary trafficking. Forms a complex containing RAB11A, ASAP1, RAB3IP, RAP11FIP3 and ARF4; the complex promotes preciliary trafficking; the complex binds to RHO in photoreceptor cells and promotes RHO ciliary transport. Post-translationally, phosphorylated by AKT1; the phosphorylation alters its GEF activity. In terms of tissue distribution, expressed in brain, kidney, heart, pancreas and placenta. Not detected in skeletal muscle or liver.

It is found in the cytoplasm. The protein resides in the nucleus. It localises to the cytoskeleton. Its subcellular location is the cell projection. The protein localises to the lamellipodium. It is found in the vesicle. The protein resides in the microtubule organizing center. It localises to the centrosome. Its activity is regulated as follows. Phosphorylation by ATK1 alters its GEF activity. Complex formation with RAB11A and RAB11FIP3 and ciliogenesis function are competitively inhibited by RAB11A-WDR44 interaction. Guanine nucleotide exchange factor (GEF) which may activate RAB8A and RAB8B. Promotes the exchange of GDP to GTP, converting inactive GDP-bound Rab proteins into their active GTP-bound form. Mediates the release of GDP from RAB8A and RAB8B but not from RAB3A or RAB5. Modulates actin organization and promotes polarized transport of RAB8A-specific vesicles to the cell surface. Together with RAB11A, RAB8A, the exocyst complex, PARD3, PRKCI, ANXA2, CDC42 and DNMBP promotes transcytosis of PODXL to the apical membrane initiation sites (AMIS), apical surface formation and lumenogenesis. Part of the ciliary targeting complex containing Rab11, ASAP1, RAB3IP and RAB11FIP3 and ARF4 that promotes RAB3IP preciliary vesicle trafficking to mother centriole and ciliogenesis initiation. In Homo sapiens (Human), this protein is Rab-3A-interacting protein.